A 631-amino-acid chain; its full sequence is Phosphomethylpyrimidine synthase (631 aa).

Residues Asn-239, Met-268, Tyr-297, His-333, Ser-353–Gly-355, Asp-394–Arg-397, and Glu-433 contribute to the substrate site. His-437 contacts Zn(2+). Tyr-460 contributes to the substrate binding site. His-501 is a binding site for Zn(2+). Residues Cys-581, Cys-584, and Cys-589 each coordinate [4Fe-4S] cluster.

This sequence belongs to the ThiC family. Homodimer. [4Fe-4S] cluster serves as cofactor.

It carries out the reaction 5-amino-1-(5-phospho-beta-D-ribosyl)imidazole + S-adenosyl-L-methionine = 4-amino-2-methyl-5-(phosphooxymethyl)pyrimidine + CO + 5'-deoxyadenosine + formate + L-methionine + 3 H(+). It functions in the pathway cofactor biosynthesis; thiamine diphosphate biosynthesis. In terms of biological role, catalyzes the synthesis of the hydroxymethylpyrimidine phosphate (HMP-P) moiety of thiamine from aminoimidazole ribotide (AIR) in a radical S-adenosyl-L-methionine (SAM)-dependent reaction. The protein is Phosphomethylpyrimidine synthase of Salmonella paratyphi A (strain AKU_12601).